We begin with the raw amino-acid sequence, 223 residues long: ATP-dependent Clp protease proteolytic subunit 2 (223 aa).

The Nucleophile role is filled by Ser-118. His-143 is a catalytic residue.

This sequence belongs to the peptidase S14 family. In terms of assembly, fourteen ClpP subunits assemble into 2 heptameric rings which stack back to back to give a disk-like structure with a central cavity, resembling the structure of eukaryotic proteasomes.

The protein localises to the cytoplasm. It carries out the reaction Hydrolysis of proteins to small peptides in the presence of ATP and magnesium. alpha-casein is the usual test substrate. In the absence of ATP, only oligopeptides shorter than five residues are hydrolyzed (such as succinyl-Leu-Tyr-|-NHMec, and Leu-Tyr-Leu-|-Tyr-Trp, in which cleavage of the -Tyr-|-Leu- and -Tyr-|-Trp bonds also occurs).. In terms of biological role, cleaves peptides in various proteins in a process that requires ATP hydrolysis. Has a chymotrypsin-like activity. Plays a major role in the degradation of misfolded proteins. This is ATP-dependent Clp protease proteolytic subunit 2 from Leifsonia xyli subsp. xyli (strain CTCB07).